A 121-amino-acid polypeptide reads, in one-letter code: Small ribosomal subunit protein uS13 (121 aa).

Residues 92–121 (RKGLPMRGQRTRTNARTRKGPRRAAQALKK) are disordered.

Belongs to the universal ribosomal protein uS13 family. In terms of assembly, part of the 30S ribosomal subunit. Forms a loose heterodimer with protein S19. Forms two bridges to the 50S subunit in the 70S ribosome.

Its function is as follows. Located at the top of the head of the 30S subunit, it contacts several helices of the 16S rRNA. In the 70S ribosome it contacts the 23S rRNA (bridge B1a) and protein L5 of the 50S subunit (bridge B1b), connecting the 2 subunits; these bridges are implicated in subunit movement. Contacts the tRNAs in the A and P-sites. The polypeptide is Small ribosomal subunit protein uS13 (Burkholderia cenocepacia (strain ATCC BAA-245 / DSM 16553 / LMG 16656 / NCTC 13227 / J2315 / CF5610) (Burkholderia cepacia (strain J2315))).